Reading from the N-terminus, the 1488-residue chain is MSIPENAIAVVGMAGRFPGAKDVSAFWSNLRRGKESIVTLSEQELRDAGVSDKTLADPAYVRRAPLLDGIDEFDAGFFGFPPLAAQVLDPQHRLFLQCAWHALEDAGADPARFDGSIGVYGTSSPSGYLLHNLLSHRDPNAVLAEGLNFDQFSLFLQNDKDFLATRISHAFNLRGPSIAVQTACSSSLVAVHLACLSLLSGECDMALAGGSSLCIPHRVGYFTSPGSMVSAVGHCRPFDVRADGTVFGSGVGLVVLKPLAAAIDAGDRIHAVIRGSAINNDGSAKMGYAAPNPAAQADVIAEAHAVSGIDSSTVSYVECHGTGTPLGDPIEIQGLRAAFEVSQTSRSAPCVLGSVKSNIGHLEVAAGIAGLIKTILCLKNKALPATLHYTSPNPELRLDQSPFVVQSKYGPWECDGVRRAGVSSFGVGGTNAHVVLEEAPAEASEVSAHAEPAGPQVILLSAQTAAALGESRTALAAALETQDGPRLSDVAYTLARRRKHNVTMAAVVHDREHAATVLRAAEHDNVFVGEAAHDGEHGDRADAAPTSDRVVFLFPGQGAQHVGMAKGLYDTEPVFAQHFDTCAAGFRDETGIDLHAEVFDGTATDLERIDRSQPALFTVEYALAKLVDTFGVRAGAYIGYSTGEYIAATLAGVFDLQTAIKTVSLRARLMHESPPGAMVAVALGPDDVTQYLPPEVELSAVNDPGNCVVAGPKDQIRALRQRLTEAGIPVRRVRATHAFHTSAMDPMLGQFQEFLSRQQLRPPRTPLLSNLTGSWMSDQQVVDPASWTRQISSPIRFADELDVVLAAPSRILVEVGPGGSLTGSAMRHPKWSTTHRTVRLMRHPLQDVDDRDTFLRALGELWSAGVEVDWTPRRPAVPHLVSLPGYPFARQRHWVEPNHTVWAQAPGANNGSPAGTADGSTAATVDAARNGESQTEVTLQRIWSQCLGVSSVDRNANFFDLGGDSLMAISIAMAAANEGLTITPQDLYEYPTLASLTAAVDASFASSGLAKPPEAQANPAVPPNVTYFLDRGLRDTGRCRVPLILRLDPKIGLPDIRAVLTAVVNHHDALRLHLVGNDGIWEQHIAAPAEFTGLSNRSVPDGVAAGSPEERAAVLGILAELLEDQTDPNAPLAAVHIAAAHGGPHYLCLAIHAMVTDDSSRQILATDIVTAFGQRLAGEEITLEPVSTGWREWSLRCAALATHPAALDTRSYWIENSTKATLWLADALPNAHTAHPPRADELTKLSSTLSVEQTSELDDGRRRFRRSIQTILLAALGRTIAQTVGEGVVAVELEGEGRSVLRPDVDLRRTVGWFTTYYPVPLACATGLGALAQLDAVHNTLKSVPHYGIGYGLLRYVYAPTGRVLGAQRTPDIHFRYAGVIPELPSGDAPVQFDSDMTLPVREPIPGMGHAIELRVYRFGGSLHLDWWYDTRRIPAATAEALERTFPLALSALIQEAIAAEHTEHDDSEIVGEPEAGALVDLSSMDAG.

Positions 5 to 438 (ENAIAVVGMA…GTNAHVVLEE (434 aa)) constitute a Ketosynthase family 3 (KS3) domain. Residues cysteine 184, histidine 320, and histidine 361 each act as for beta-ketoacyl synthase activity in the active site. The interval 551-868 (VFLFPGQGAQ…GELWSAGVEV (318 aa)) is acyltransferase. Residue serine 641 is the For malonyltransferase activity of the active site. In terms of domain architecture, Carrier spans 930–1004 (NGESQTEVTL…SLTAAVDASF (75 aa)). Serine 965 carries the O-(pantetheine 4'-phosphoryl)serine modification. 1286–1331 (EGVVAVELEGEGRSVLRPDVDLRRTVGWFTTYYPVPLACATGLGAL) contributes to the NADP(+) binding site.

The cofactor is NADP(+). Requires pantetheine 4'-phosphate as cofactor.

It carries out the reaction icosanoyl-[(phenol)carboxyphthiodiolenone synthase] + 2 (S)-methylmalonyl-CoA + 3 malonyl-CoA + 5 NADPH + 10 H(+) = C32-carboxyphthiodiolenone-[(phenol)carboxyphthiodiolenone synthase] + 5 CO2 + 5 NADP(+) + 5 CoA + 2 H2O. The catalysed reaction is docosanoyl-[(phenol)carboxyphthiodiolenone synthase] + 2 (S)-methylmalonyl-CoA + 3 malonyl-CoA + 5 NADPH + 10 H(+) = C34-carboxyphthiodiolenone-[(phenol)carboxyphthiodiolenone synthase] + 5 CO2 + 5 NADP(+) + 5 CoA + 2 H2O. The enzyme catalyses 17-(4-hydroxyphenyl)heptadecanoyl-[(phenol)carboxyphthiodiolenone synthase] + 2 (S)-methylmalonyl-CoA + 3 malonyl-CoA + 5 NADPH + 10 H(+) = C35-(phenol)carboxyphthiodiolenone-[(phenol)carboxyphthiodiolenone synthase] + 5 CO2 + 5 NADP(+) + 5 CoA + 2 H2O. It catalyses the reaction 19-(4-hydroxyphenyl)nonadecanoyl-[(phenol)carboxyphthiodiolenone synthase] + 2 (S)-methylmalonyl-CoA + 3 malonyl-CoA + 5 NADPH + 10 H(+) = C37-(phenol)carboxyphthiodiolenone-[(phenol)carboxyphthiodiolenone synthase] + 5 CO2 + 5 NADP(+) + 5 CoA + 2 H2O. Its pathway is lipid metabolism; fatty acid biosynthesis. In terms of biological role, part of the PpsABCDE complex involved in the biosynthesis of the lipid core common to phthiocerols and phenolphthiocerols by successive additions of malonyl-CoA or methylmalonyl-CoA extender units. PpsA can accept as substrate the activated forms of either icosanoyl (C20), docosanoyl (C22) or lignoceroyl (C24) groups from FadD26, or a (4-hydroxyphenyl)-C17 or (4-hydroxyphenyl)-C19 fatty acyl from FadD29. PpsA initiates the biosynthesis and extends its substrate using a malonyl-CoA extender unit. The PpsB and PpsC proteins add the second and third malonyl-CoA extender units. PpsD adds an (R)-methylmalonyl unit and PpsE adds a second (R)-methylmalonyl unit. The incorporation of the methylmalonyl units results in formation of two branched methyl groups in the elongated product. This Mycobacterium bovis (strain ATCC BAA-935 / AF2122/97) protein is Phenolphthiocerol/phthiocerol polyketide synthase subunit E (ppsE).